We begin with the raw amino-acid sequence, 246 residues long: Pyridoxine 5'-phosphate synthase (246 aa).

Asn12 contacts 3-amino-2-oxopropyl phosphate. 1-deoxy-D-xylulose 5-phosphate is bound at residue 14 to 15 (DH). Position 23 (Arg23) interacts with 3-amino-2-oxopropyl phosphate. Catalysis depends on His48, which acts as the Proton acceptor. 1-deoxy-D-xylulose 5-phosphate is bound by residues Arg50 and His55. Glu75 serves as the catalytic Proton acceptor. Residue Thr105 coordinates 1-deoxy-D-xylulose 5-phosphate. The active-site Proton donor is His196. 3-amino-2-oxopropyl phosphate is bound by residues Gly197 and 218-219 (GH).

Belongs to the PNP synthase family. Homooctamer; tetramer of dimers.

The protein resides in the cytoplasm. It carries out the reaction 3-amino-2-oxopropyl phosphate + 1-deoxy-D-xylulose 5-phosphate = pyridoxine 5'-phosphate + phosphate + 2 H2O + H(+). It participates in cofactor biosynthesis; pyridoxine 5'-phosphate biosynthesis; pyridoxine 5'-phosphate from D-erythrose 4-phosphate: step 5/5. Catalyzes the complicated ring closure reaction between the two acyclic compounds 1-deoxy-D-xylulose-5-phosphate (DXP) and 3-amino-2-oxopropyl phosphate (1-amino-acetone-3-phosphate or AAP) to form pyridoxine 5'-phosphate (PNP) and inorganic phosphate. This Pseudomonas putida (strain GB-1) protein is Pyridoxine 5'-phosphate synthase.